Reading from the N-terminus, the 175-residue chain is Adenylate kinase isoenzyme 6 homolog (175 aa).

The ATP site is built by G17, G19, K20, T21, and S22. The interval 37 to 60 is NMPbind; the sequence is DISSAVKEKELHDGWDSEFQCYIL. Residues 112–122 form an LID region; that stretch reads KRNYNQHKITN. An ATP-binding site is contributed by R113.

Belongs to the adenylate kinase family. AK6 subfamily. In terms of assembly, monomer and homodimer. Interacts with small ribosomal subunit protein uS11. Not a structural component of 43S pre-ribosomes, but transiently interacts with them by binding to uS11.

The protein resides in the cytoplasm. It is found in the nucleus. The catalysed reaction is AMP + ATP = 2 ADP. It catalyses the reaction ATP + H2O = ADP + phosphate + H(+). Broad-specificity nucleoside monophosphate (NMP) kinase that catalyzes the reversible transfer of the terminal phosphate group between nucleoside triphosphates and monophosphates. Also has ATPase activity. Involved in the late cytoplasmic maturation steps of the 40S ribosomal particles, specifically 18S rRNA maturation. While NMP activity is not required for ribosome maturation, ATPase activity is. Associates transiently with small ribosomal subunit protein uS11. ATP hydrolysis breaks the interaction with uS11. May temporarily remove uS11 from the ribosome to enable a conformational change of the ribosomal RNA that is needed for the final maturation step of the small ribosomal subunit. Its NMP activity may have a role in nuclear energy homeostasis. The polypeptide is Adenylate kinase isoenzyme 6 homolog (Dictyostelium discoideum (Social amoeba)).